Consider the following 492-residue polypeptide: MEHSVPKNKLKKLSEDSLTKQPEEVFDVLEKLGEGSYGSVFKAIHKESGQVVAIKQVPVESDLQEIIKEISIMQQCDSPYVVKYYGSYFKNTDLWIVMEYCGAGSVSDIIRLRNKTLTEDEIATVLKSTLKGLEYLHFMRKIHRDIKAGNILLNTEGHAKLADFGVAGQLTDTMAKRNTVIGTPFWMAPEVIQEIGYNCVADIWSLGITSIEMAEGKPPYADIHPMRAIFMIPTNPPPTFRKPEHWSDDFTDFVKKCLVKNPEQRATATQLLQHPFIVGAKPVSILRDLITEAMDMKAKRQQEQQRELEEDDENSEEEVEVDSHTMVKSGSESAGTMRATGTMSDGAQTMIEHGSTMLESNLGTMVINSDDEEEEEDLGSMRRNPTSQQIQRPSFMDYFDKQDSNKAQEGFNHNQQDPCLISKTAFPDNWKVPQDGDFDFLKNLDFEELQMRLTALDPMMEREIEELRQRYTAKRQPILDAMDAKKRRQQNF.

The Protein kinase domain maps to 26–277 (FDVLEKLGEG…ATQLLQHPFI (252 aa)). ATP contacts are provided by residues 32-40 (LGEGSYGSV) and Lys-55. Asp-145 (proton acceptor) is an active-site residue. Residue Thr-179 is modified to Phosphothreonine; by autocatalysis. 2 coiled-coil regions span residues 286–328 (LRDL…TMVK) and 443–476 (NLDFEELQMRLTALDPMMEREIEELRQRYTAKRQ). Positions 297–307 (KAKRQQEQQRE) are enriched in basic and acidic residues. The disordered stretch occupies residues 297–339 (KAKRQQEQQRELEEDDENSEEEVEVDSHTMVKSGSESAGTMRA). Positions 308–320 (LEEDDENSEEEVE) are enriched in acidic residues. A compositionally biased stretch (polar residues) spans 326 to 339 (MVKSGSESAGTMRA). Positions 438–485 (FDFLKNLDFEELQMRLTALDPMMEREIEELRQRYTAKRQPILDAMDAK) constitute an SARAH domain.

Belongs to the protein kinase superfamily. STE Ser/Thr protein kinase family. STE20 subfamily. In terms of assembly, homodimer; mediated via the coiled-coil region. It depends on Mg(2+) as a cofactor.

The protein localises to the cytoplasm. It localises to the nucleus. It carries out the reaction L-seryl-[protein] + ATP = O-phospho-L-seryl-[protein] + ADP + H(+). It catalyses the reaction L-threonyl-[protein] + ATP = O-phospho-L-threonyl-[protein] + ADP + H(+). Its activity is regulated as follows. Inhibited by the C-terminal non-catalytic region. Activated by caspase-cleavage. Full activation also requires homodimerization and autophosphorylation of Thr-179. Functionally, stress-activated, pro-apoptotic kinase which, following caspase-cleavage, enters the nucleus and induces chromatin condensation followed by internucleosomal DNA fragmentation. Key component of the Hippo signaling pathway which plays a pivotal role in organ size control and tumor suppression by restricting proliferation and promoting apoptosis. The core of this pathway is composed of a kinase cascade wherein stk3/mst2 and stk4/mst1, in complex with its regulatory protein sav1, phosphorylates and activates lats1/2 in complex with its regulatory protein mob1, which in turn phosphorylates and inactivates yap1 oncoprotein and wwtr1/taz. Phosphorylation of yap1 by lats2 inhibits its translocation into the nucleus to regulate cellular genes important for cell proliferation, cell death, and cell migration. This is Serine/threonine-protein kinase 3 (stk3) from Danio rerio (Zebrafish).